The following is a 358-amino-acid chain: Peptide chain release factor 1 (358 aa).

Gln233 bears the N5-methylglutamine mark.

The protein belongs to the prokaryotic/mitochondrial release factor family. In terms of processing, methylated by PrmC. Methylation increases the termination efficiency of RF1.

It is found in the cytoplasm. Functionally, peptide chain release factor 1 directs the termination of translation in response to the peptide chain termination codons UAG and UAA. The protein is Peptide chain release factor 1 of Lachnoclostridium phytofermentans (strain ATCC 700394 / DSM 18823 / ISDg) (Clostridium phytofermentans).